Consider the following 644-residue polypeptide: 1-deoxy-D-xylulose-5-phosphate synthase (644 aa).

Residues His78 and 120 to 122 (GHA) each bind thiamine diphosphate. Residue Asp149 coordinates Mg(2+). Thiamine diphosphate is bound by residues 150 to 151 (AA), Asn178, and Glu373. Asn178 is a Mg(2+) binding site.

Belongs to the transketolase family. DXPS subfamily. Homodimer. The cofactor is Mg(2+). It depends on thiamine diphosphate as a cofactor.

It catalyses the reaction D-glyceraldehyde 3-phosphate + pyruvate + H(+) = 1-deoxy-D-xylulose 5-phosphate + CO2. Its pathway is metabolic intermediate biosynthesis; 1-deoxy-D-xylulose 5-phosphate biosynthesis; 1-deoxy-D-xylulose 5-phosphate from D-glyceraldehyde 3-phosphate and pyruvate: step 1/1. Functionally, catalyzes the acyloin condensation reaction between C atoms 2 and 3 of pyruvate and glyceraldehyde 3-phosphate to yield 1-deoxy-D-xylulose-5-phosphate (DXP). This Chlamydia abortus (strain DSM 27085 / S26/3) (Chlamydophila abortus) protein is 1-deoxy-D-xylulose-5-phosphate synthase.